The chain runs to 434 residues: Nuclear envelope integral membrane protein 1b (434 aa).

The first 29 residues, 1–29 (MAGEVEGRGCGFSLGVLVTLLVLPLPSLC), serve as a signal peptide directing secretion. The next 5 helical transmembrane spans lie at 151 to 171 (PRLFFVFLCGLLLFFYGDTLS), 175 to 195 (LFFYSTGITVGMLASMLILVF), 206 to 226 (PFFALLLGGWSVSIYVIQLVF), 239 to 259 (YLIVYLGIVGFVSFAFCYIYG), and 280 to 300 (LLMYVSVQIQHIAVTIVVIAF). The interval 176-287 (FFYSTGITVG…GLLLMYVSVQ (112 aa)) is a; required for its colocalization with lamins at the nuclear envelope. The short motif at 317–325 (RKIKLKRAK) is the Nuclear localization signal element. Positions 326-395 (PGPPRLLTEE…LTPNEVSVHE (70 aa)) are b; interaction with ran. The tract at residues 326-434 (PGPPRLLTEE…PLYPIPRSVF (109 aa)) is interaction with banf1-a and banf1-b. Positions 368–375 (SRIQSPKR) are BAF-binding site (BBS); essential for interaction with banf1-a, banf1-b and ran.

The protein belongs to the NEMP family. Interacts with banf1-a and banf1-b. Interacts with ran-gtp. Post-translationally, phosphorylated.

It localises to the nucleus inner membrane. Its subcellular location is the nucleus envelope. Functionally, in concert with ran, required for proper eye development. May be involved in the expression of early eye marker genes. Contributes to nuclear envelope stiffness in germ cells. Required for fertility. Essential for normal erythropoiesis. Required for efficient nuclear envelope opening and enucleation during the late stages of erythroblast maturation. This Xenopus laevis (African clawed frog) protein is Nuclear envelope integral membrane protein 1b (nemp1b).